Reading from the N-terminus, the 837-residue chain is Semaphorin-4B (837 aa).

A signal peptide spans 1 to 43 (MLRTAMGLRSWLAAPWGALPPRPPLLLLLLLLLLLQPPPPTWA). The Extracellular segment spans residues 44–717 (LSPRISLPLG…WGADRSYWKE (674 aa)). The region spanning 47-523 (RISLPLGSEE…SHSGVVQVPM (477 aa)) is the Sema domain. N-linked (GlcNAc...) asparagine glycosylation is found at Asn-69 and Asn-96. 2 cysteine pairs are disulfide-bonded: Cys-120-Cys-131 and Cys-149-Cys-158. A glycan (N-linked (GlcNAc...) asparagine) is linked at Asn-165. Cystine bridges form between Cys-286-Cys-399 and Cys-310-Cys-359. Asn-410 and Asn-525 each carry an N-linked (GlcNAc...) asparagine glycan. Positions 525-579 (NCSLYRSCGDCLLARDPYCAWSGSSCKHVSLYQPQLATRPWIQDIEGASAKDLCS) constitute a PSI domain. 2 disulfide bridges follow: Cys-526/Cys-543 and Cys-611/Cys-656. The region spanning 604–663 (NTVNTLACPLLSNLATRLWLRNGAPVNASASCHVLPTGDLLLVGTQQLGEFQCWSLEEGF) is the Ig-like C2-type domain. N-linked (GlcNAc...) asparagine glycosylation occurs at Asn-630. The helical transmembrane segment at 718–738 (FLVMCTLFVLAVLLPVLFLLY) threads the bilayer. At 739 to 837 (RHRNSMKVFL…LGSEIRDSVV (99 aa)) the chain is on the cytoplasmic side. A disordered region spans residues 767–805 (PETRPLNGLGPPSTPLDHRGYQSLSDSPPGSRVFTESEK). Ser-793, Ser-818, and Ser-830 each carry phosphoserine.

It belongs to the semaphorin family.

It localises to the membrane. Inhibits axonal extension by providing local signals to specify territories inaccessible for growing axons. This Homo sapiens (Human) protein is Semaphorin-4B.